Here is a 1027-residue protein sequence, read N- to C-terminus: Multidrug resistance protein MdtC (1027 aa).

The next 12 helical transmembrane spans lie at 16-36 (LLSL…PVAP), 333-353 (EVER…FLFL), 360-380 (LIPA…MYLC), 387-407 (LSLM…IVVL), 431-451 (VGFT…PLLL), 463-483 (FAIT…TLTP), 528-548 (WIMA…ISAP), 853-873 (LILI…LYES), 875-895 (IHPL…LLAL), 897-917 (LFDT…IGIV), 953-973 (PIIM…LSSG), and 984-1004 (ITIV…TPII).

It belongs to the resistance-nodulation-cell division (RND) (TC 2.A.6) family. MdtC subfamily. In terms of assembly, part of a tripartite efflux system composed of MdtA, MdtB and MdtC. MdtC forms a heteromultimer with MdtB.

Its subcellular location is the cell inner membrane. The sequence is that of Multidrug resistance protein MdtC from Proteus mirabilis (strain HI4320).